The following is a 186-amino-acid chain: Apolipophorin-3 (186 aa).

Residues 1 to 18 form the signal peptide; it reads MAAKYVFVVAACSALAQA. A propeptide spanning residues 19 to 23 is cleaved from the precursor; it reads GIVRR.

Belongs to the insect apolipophorin-3 family. Equilibrium between a soluble monomer and a bound lipoprotein form. Apolipophorin-3 associates with lipophorin during lipid loading until each particle contains 9 or 14 molecules of apolipophorin-3. Expressed in hemolymph. Also found in hemocytes and fat body.

Its subcellular location is the secreted. In terms of biological role, assists in the loading of diacylglycerol, generated from triacylglycerol stores in the fat body through the action of adipokinetic hormone, into lipophorin, the hemolymph lipoprotein. It increases the lipid carrying capacity of lipophorin by covering the expanding hydrophobic surface resulting from diacylglycerol uptake. It thus plays a critical role in the transport of lipids during flight in several species of insects. Has antibacterial activity against the Gram-positive bacteria L.monocytogenes (MIC=6.5 uM). Lacks antibacterial activity against the Gram-positive bacteria B.circulans, M.luteus, S.aureus, and S.lutea, and the Gram-negative bacteria E.coli D31, E.coli ATCC 25922, and S.typhimurium. Lacks antifungal activity against S.cerevisiae, P.pastoris, Z.marxianus, C.albicans, C.wickerhamii, A.niger, F.oxysporum, and T.harizianum. This is Apolipophorin-3 from Galleria mellonella (Greater wax moth).